The primary structure comprises 369 residues: Olfactory receptor 2T1 (369 aa).

Residues 1-76 (MWQEYYFLNV…LFNRKETSGL (76 aa)) are Extracellular-facing. Asn-56 carries an N-linked (GlcNAc...) asparagine glycan. Residues 77-97 (IFAIISIIFFTALMANGVMIF) form a helical membrane-spanning segment. Residues 98-107 (LIQTDLRLHT) are Cytoplasmic-facing. The chain crosses the membrane as a helical span at residues 108–128 (PMYFLLSHLSLIDMMYISTIV). Topologically, residues 129–148 (PKMLVNYLLDQRTISFVGCT) are extracellular. An intrachain disulfide couples Cys-147 to Cys-239. Residues 149–169 (AQHFLYLTLVGAEFFLLGLMA) form a helical membrane-spanning segment. The Cytoplasmic segment spans residues 170-191 (YDRYVAICNPLRYPVLMSRRVC). Residues 192-212 (WMIIAGSWFGGSLDGFLLTPI) traverse the membrane as a helical segment. Topologically, residues 213–247 (TMSFPFCNSREINHFFCEAPAVLKLACADTALYET) are extracellular. Residues 248 to 268 (VMYVCCVLMLLIPFSVVLASY) form a helical membrane-spanning segment. Over 269–286 (ARILTTVQCMSSVEGRKK) the chain is Cytoplasmic. The chain crosses the membrane as a helical span at residues 287–307 (AFATCSSHMTVVSLFYGAAMY). The Extracellular segment spans residues 308 to 321 (TYMLPHSYHKPAQD). A helical membrane pass occupies residues 322-342 (KVLSVFYTILTPMLNPLIYSL). At 343-369 (RNKDVTGALKRALGRFKGPQRVSGGVF) the chain is on the cytoplasmic side.

Belongs to the G-protein coupled receptor 1 family.

It localises to the cell membrane. Odorant receptor. The polypeptide is Olfactory receptor 2T1 (OR2T1) (Homo sapiens (Human)).